The sequence spans 706 residues: Fatty acid oxidation complex subunit alpha (706 aa).

The interval 1 to 188 (MEKTFNLTRR…KMGLVNDVVP (188 aa)) is enoyl-CoA hydratase. Positions 308–706 (RKVKKAVILG…TMAQENAHFF (399 aa)) are 3-hydroxyacyl-CoA dehydrogenase.

This sequence in the N-terminal section; belongs to the enoyl-CoA hydratase/isomerase family. In the central section; belongs to the 3-hydroxyacyl-CoA dehydrogenase family. Heterotetramer of two alpha chains (FadJ) and two beta chains (FadI).

The protein localises to the cytoplasm. The enzyme catalyses a (3S)-3-hydroxyacyl-CoA = a (2E)-enoyl-CoA + H2O. It carries out the reaction a 4-saturated-(3S)-3-hydroxyacyl-CoA = a (3E)-enoyl-CoA + H2O. The catalysed reaction is a (3S)-3-hydroxyacyl-CoA + NAD(+) = a 3-oxoacyl-CoA + NADH + H(+). It catalyses the reaction (3S)-3-hydroxybutanoyl-CoA = (3R)-3-hydroxybutanoyl-CoA. Its pathway is lipid metabolism; fatty acid beta-oxidation. Its function is as follows. Catalyzes the formation of a hydroxyacyl-CoA by addition of water on enoyl-CoA. Also exhibits 3-hydroxyacyl-CoA epimerase and 3-hydroxyacyl-CoA dehydrogenase activities. The sequence is that of Fatty acid oxidation complex subunit alpha from Shewanella baltica (strain OS185).